The following is a 228-amino-acid chain: FCS-Like Zinc finger 12 (228 aa).

The FLZ-type zinc finger occupies 162–205 (DFLTSCCLCKKKLQGKDIYMYKGDEGFCSKECRSLKIMEDSLKE).

The protein belongs to the FLZ family. Interacts with KIN10 and KIN11 via its FLZ-type zinc finger domain. Interacts with KINB1 and KINB2 via its N-terminal part. Forms homodimer and heterodimer with FLZ2 and FLZ10 in vitro.

May act as an adapter to facilitate the interaction of SnRK1 complex with effector proteins, conferring tissue- and stimulus-type specific differences in the SnRK1 regulation pathway. The polypeptide is FCS-Like Zinc finger 12 (Arabidopsis thaliana (Mouse-ear cress)).